The primary structure comprises 147 residues: Hemoglobin subunit beta (147 aa).

At V2 the chain carries N-acetylvaline. The region spanning H3 to H147 is the Globin domain. Position 13 is a phosphothreonine (T13). Position 45 is a phosphoserine (S45). K60 bears the N6-acetyllysine mark. A heme b-binding site is contributed by H64. N6-acetyllysine is present on K83. H93 contacts heme b. S-nitrosocysteine is present on C94. K145 is subject to N6-acetyllysine.

It belongs to the globin family. As to quaternary structure, heterotetramer of two alpha chains and two beta chains. In terms of tissue distribution, red blood cells.

Functionally, involved in oxygen transport from the lung to the various peripheral tissues. In Papio anubis (Olive baboon), this protein is Hemoglobin subunit beta (HBB).